A 369-amino-acid chain; its full sequence is Probable serine/threonine-protein kinase FMP48 (369 aa).

The 368-residue stretch at 2–369 folds into the Protein kinase domain; the sequence is YTKLRSIQSG…EKPCLIQDGK (368 aa). ATP contacts are provided by residues 8–16 and lysine 31; that span reads IQSGTFSTV. The active-site Proton acceptor is aspartate 133.

This sequence belongs to the protein kinase superfamily. Ser/Thr protein kinase family.

The protein localises to the mitochondrion. The catalysed reaction is L-seryl-[protein] + ATP = O-phospho-L-seryl-[protein] + ADP + H(+). The enzyme catalyses L-threonyl-[protein] + ATP = O-phospho-L-threonyl-[protein] + ADP + H(+). The chain is Probable serine/threonine-protein kinase FMP48 (FMP48) from Saccharomyces cerevisiae (strain ATCC 204508 / S288c) (Baker's yeast).